The chain runs to 446 residues: Bifunctional protein GlmU (446 aa).

Residues 1 to 226 (MLAVAILAAG…PDEVNGINDR (226 aa)) form a pyrophosphorylase region. UDP-N-acetyl-alpha-D-glucosamine-binding positions include 7–10 (LAAG), lysine 21, glutamine 73, and 78–79 (GT). Position 103 (aspartate 103) interacts with Mg(2+). Residues glycine 140, glutamate 155, asparagine 170, and asparagine 224 each contribute to the UDP-N-acetyl-alpha-D-glucosamine site. Residue asparagine 224 coordinates Mg(2+). Residues 227–247 (CQLANCEALLQERLRNYWMKE) form a linker region. Residues 248–446 (GVTFTDPASC…SKQLIKNGWQ (199 aa)) are N-acetyltransferase. Residues arginine 329 and lysine 347 each coordinate UDP-N-acetyl-alpha-D-glucosamine. Histidine 359 functions as the Proton acceptor in the catalytic mechanism. Positions 362 and 373 each coordinate UDP-N-acetyl-alpha-D-glucosamine. Acetyl-CoA-binding positions include alanine 376, 382-383 (NY), alanine 419, and arginine 436.

In the N-terminal section; belongs to the N-acetylglucosamine-1-phosphate uridyltransferase family. This sequence in the C-terminal section; belongs to the transferase hexapeptide repeat family. As to quaternary structure, homotrimer. The cofactor is Mg(2+).

It is found in the cytoplasm. The catalysed reaction is alpha-D-glucosamine 1-phosphate + acetyl-CoA = N-acetyl-alpha-D-glucosamine 1-phosphate + CoA + H(+). It catalyses the reaction N-acetyl-alpha-D-glucosamine 1-phosphate + UTP + H(+) = UDP-N-acetyl-alpha-D-glucosamine + diphosphate. It functions in the pathway nucleotide-sugar biosynthesis; UDP-N-acetyl-alpha-D-glucosamine biosynthesis; N-acetyl-alpha-D-glucosamine 1-phosphate from alpha-D-glucosamine 6-phosphate (route II): step 2/2. Its pathway is nucleotide-sugar biosynthesis; UDP-N-acetyl-alpha-D-glucosamine biosynthesis; UDP-N-acetyl-alpha-D-glucosamine from N-acetyl-alpha-D-glucosamine 1-phosphate: step 1/1. It participates in bacterial outer membrane biogenesis; LPS lipid A biosynthesis. Catalyzes the last two sequential reactions in the de novo biosynthetic pathway for UDP-N-acetylglucosamine (UDP-GlcNAc). The C-terminal domain catalyzes the transfer of acetyl group from acetyl coenzyme A to glucosamine-1-phosphate (GlcN-1-P) to produce N-acetylglucosamine-1-phosphate (GlcNAc-1-P), which is converted into UDP-GlcNAc by the transfer of uridine 5-monophosphate (from uridine 5-triphosphate), a reaction catalyzed by the N-terminal domain. This is Bifunctional protein GlmU from Prochlorococcus marinus (strain MIT 9313).